Reading from the N-terminus, the 357-residue chain is Phosphoserine aminotransferase (357 aa).

Arg-41 is a binding site for L-glutamate. Pyridoxal 5'-phosphate-binding positions include 75–76 (GT), Trp-100, Thr-150, Asp-170, and Gln-193. An N6-(pyridoxal phosphate)lysine modification is found at Lys-194. 234–235 (NT) serves as a coordination point for pyridoxal 5'-phosphate.

Belongs to the class-V pyridoxal-phosphate-dependent aminotransferase family. SerC subfamily. Homodimer. It depends on pyridoxal 5'-phosphate as a cofactor.

Its subcellular location is the cytoplasm. It carries out the reaction O-phospho-L-serine + 2-oxoglutarate = 3-phosphooxypyruvate + L-glutamate. The catalysed reaction is 4-(phosphooxy)-L-threonine + 2-oxoglutarate = (R)-3-hydroxy-2-oxo-4-phosphooxybutanoate + L-glutamate. Its pathway is amino-acid biosynthesis; L-serine biosynthesis; L-serine from 3-phospho-D-glycerate: step 2/3. In terms of biological role, catalyzes the reversible conversion of 3-phosphohydroxypyruvate to phosphoserine and of 3-hydroxy-2-oxo-4-phosphonooxybutanoate to phosphohydroxythreonine. The protein is Phosphoserine aminotransferase of Lactiplantibacillus plantarum (strain ATCC BAA-793 / NCIMB 8826 / WCFS1) (Lactobacillus plantarum).